A 377-amino-acid polypeptide reads, in one-letter code: E3 ubiquitin-protein ligase rififylin (377 aa).

The FYVE-type zinc-finger motif lies at Thr-55–Ala-107. Residues Leu-115 to Thr-134 form the SAP 1 domain. Residues Leu-176–Pro-249 form a disordered region. The span at Gly-190–Ala-212 shows a compositional bias: polar residues. Residues Glu-235–Asp-245 show a composition bias toward acidic residues. A phosphoserine mark is found at Ser-240, Ser-243, Ser-246, and Ser-254. An SAP 2 domain is found at Ile-264 to Arg-278. The RING-type zinc finger occupies Cys-330–Arg-365.

In terms of assembly, interacts with CASP8 and CASP10. Interacts with RIPK1 (via protein kinase domain); involved in RIPK1 ubiquitination. Interacts with PRR5L. Interacts (via RING-type zinc finger) with p53/TP53; involved in p53/TP53 ubiquitination. Interacts (via RING-type zinc finger) with MDM2; the interaction stabilizes MDM2. Autoubiquitinated. Post-translationally, palmitoylated. In terms of processing, undergoes caspase-mediated cleavage upon death-receptor activation, by TNFSF10 for instance. May be mediated by the caspases CASP8 and CASP10 in a negative feedback loop. Ubiquitous. Detected in heart, brain, spleen, lung, liver, skeletal muscle, kidney, testis, thymus, whole embryo and embryonic stem cells.

It localises to the cytoplasm. Its subcellular location is the cytosol. The protein resides in the cell membrane. It is found in the recycling endosome membrane. It carries out the reaction S-ubiquitinyl-[E2 ubiquitin-conjugating enzyme]-L-cysteine + [acceptor protein]-L-lysine = [E2 ubiquitin-conjugating enzyme]-L-cysteine + N(6)-ubiquitinyl-[acceptor protein]-L-lysine.. It participates in protein modification; protein ubiquitination. E3 ubiquitin-protein ligase that regulates several biological processes through the ubiquitin-mediated proteasomal degradation of various target proteins. Mediates 'Lys-48'-linked polyubiquitination of PRR5L and its subsequent proteasomal degradation thereby indirectly regulating cell migration through the mTORC2 complex. Also ubiquitinates the caspases CASP8 and CASP10, promoting their proteasomal degradation, to negatively regulate apoptosis downstream of death domain receptors. Also negatively regulates the tumor necrosis factor-mediated signaling pathway through targeting of RIPK1 to ubiquitin-mediated proteasomal degradation. Negatively regulates p53/TP53 through its direct ubiquitination and targeting to proteasomal degradation. Indirectly, may also negatively regulate p53/TP53 through ubiquitination and degradation of SFN. May also play a role in endocytic recycling. This chain is E3 ubiquitin-protein ligase rififylin, found in Mus musculus (Mouse).